The sequence spans 199 residues: NADH-quinone oxidoreductase subunit C (199 aa).

Belongs to the complex I 30 kDa subunit family. As to quaternary structure, NDH-1 is composed of 14 different subunits. Subunits NuoB, C, D, E, F, and G constitute the peripheral sector of the complex.

It is found in the cell inner membrane. It carries out the reaction a quinone + NADH + 5 H(+)(in) = a quinol + NAD(+) + 4 H(+)(out). Functionally, NDH-1 shuttles electrons from NADH, via FMN and iron-sulfur (Fe-S) centers, to quinones in the respiratory chain. The immediate electron acceptor for the enzyme in this species is believed to be ubiquinone. Couples the redox reaction to proton translocation (for every two electrons transferred, four hydrogen ions are translocated across the cytoplasmic membrane), and thus conserves the redox energy in a proton gradient. This is NADH-quinone oxidoreductase subunit C from Cupriavidus pinatubonensis (strain JMP 134 / LMG 1197) (Cupriavidus necator (strain JMP 134)).